We begin with the raw amino-acid sequence, 80 residues long: Exodeoxyribonuclease 7 small subunit (80 aa).

This sequence belongs to the XseB family. As to quaternary structure, heterooligomer composed of large and small subunits.

The protein resides in the cytoplasm. The enzyme catalyses Exonucleolytic cleavage in either 5'- to 3'- or 3'- to 5'-direction to yield nucleoside 5'-phosphates.. Functionally, bidirectionally degrades single-stranded DNA into large acid-insoluble oligonucleotides, which are then degraded further into small acid-soluble oligonucleotides. The polypeptide is Exodeoxyribonuclease 7 small subunit (Escherichia coli (strain SE11)).